Here is a 477-residue protein sequence, read N- to C-terminus: Ankyrin repeat, SAM and basic leucine zipper domain-containing protein 1 (477 aa).

A disordered region spans residues 1–24 (MATSALRGLAVAGGGESSESEDDG). Residues S17, S18, and S20 each carry the phosphoserine modification. ANK repeat units follow at residues 46–76 (EKKE…SVDA), 80–109 (YGWT…NASF), 112–146 (DKQT…DPNV), 150–179 (RLMT…EVNT), 183–212 (NGYT…NKML), and 216–245 (DGKL…PLEG). Residues 274-336 (SYAEFGDLEV…KILAALKELE (63 aa)) form the SAM domain.

In terms of assembly, interacts with DDX4, PIWIL1, RANBP9 and TDRD1.

It localises to the cytoplasm. Its function is as follows. Plays a central role during spermatogenesis by repressing transposable elements and preventing their mobilization, which is essential for the germline integrity. Acts via the piRNA metabolic process, which mediates the repression of transposable elements during meiosis by forming complexes composed of piRNAs and Piwi proteins and governs the methylation and subsequent repression of transposons. Its association with pi-bodies suggests a participation in the primary piRNAs metabolic process. Required prior to the pachytene stage to facilitate the production of multiple types of piRNAs, including those associated with repeats involved in the regulation of retrotransposons. May act by mediating protein-protein interactions during germ cell maturation. This Saimiri boliviensis boliviensis (Bolivian squirrel monkey) protein is Ankyrin repeat, SAM and basic leucine zipper domain-containing protein 1 (ASZ1).